The following is a 129-amino-acid chain: Small ribosomal subunit protein uS11 (129 aa).

It belongs to the universal ribosomal protein uS11 family. In terms of assembly, part of the 30S ribosomal subunit. Interacts with proteins S7 and S18. Binds to IF-3.

Located on the platform of the 30S subunit, it bridges several disparate RNA helices of the 16S rRNA. Forms part of the Shine-Dalgarno cleft in the 70S ribosome. The sequence is that of Small ribosomal subunit protein uS11 from Desulforamulus reducens (strain ATCC BAA-1160 / DSM 100696 / MI-1) (Desulfotomaculum reducens).